Here is a 316-residue protein sequence, read N- to C-terminus: Geminin coiled-coil domain-containing protein 1 (316 aa).

Residues 82–117 (QISANKQLQDTLLQKEEELSRLHEENNKLKEFLNSA) are a coiled coil. Polar residues-rich tracts occupy residues 134-155 (GQSSFCTNPNSRVPFSSNSTPG) and 207-234 (MSLQPKQDSPSSGYSSAHLTPGHSQAAT). Disordered regions lie at residues 134–160 (GQSSFCTNPNSRVPFSSNSTPGSKAKR) and 207–269 (MSLQ…DVAP). T153 is subject to Phosphothreonine; by cdk2. The span at 235-252 (SCSLSPSQCSSASLPESE) shows a compositional bias: low complexity. A compositionally biased stretch (polar residues) spans 253-262 (TASPLSSPTY).

Belongs to the GEMC1 family. In terms of assembly, interacts with topbp1. Interacts with Cdc45l and the kinase cdk2-cyclin-E (the interaction is direct). Post-translationally, highly phosphorylated by cdk2; stimulates initiation of DNA replication. In terms of tissue distribution, expressed in most tissues. Enriched in proliferating cells from skin and gut.

It is found in the nucleus. In terms of biological role, regulator of DNA replication. Promotes initiation of chromosomal DNA replication by mediating topbp1- and cdk2-dependent recruitment of cdc45l onto replication origins. This is Geminin coiled-coil domain-containing protein 1 (gmnc) from Xenopus laevis (African clawed frog).